The following is a 546-amino-acid chain: Chaperonin GroEL (546 aa).

ATP is bound by residues 30–33, lysine 51, 87–91, glycine 415, 479–481, and aspartate 495; these read TLGP, DGTTT, and NAA. The tract at residues 527-546 is disordered; the sequence is DKPAAPPMPGGMGGMGGMDF. The segment covering 536–546 has biased composition (gly residues); that stretch reads GGMGGMGGMDF.

Belongs to the chaperonin (HSP60) family. In terms of assembly, forms a cylinder of 14 subunits composed of two heptameric rings stacked back-to-back. Interacts with the co-chaperonin GroES.

The protein resides in the cytoplasm. It catalyses the reaction ATP + H2O + a folded polypeptide = ADP + phosphate + an unfolded polypeptide.. Functionally, together with its co-chaperonin GroES, plays an essential role in assisting protein folding. The GroEL-GroES system forms a nano-cage that allows encapsulation of the non-native substrate proteins and provides a physical environment optimized to promote and accelerate protein folding. This chain is Chaperonin GroEL, found in Bordetella petrii (strain ATCC BAA-461 / DSM 12804 / CCUG 43448).